The sequence spans 216 residues: Ras-related protein Rab-11A (216 aa).

Position 2 is an N-acetylglycine (G2). The GTP site is built by S20, G21, V22, G23, K24, S25, N26, N37, L38, S40, S42, and T43. S25 contributes to the Mg(2+) binding site. A Switch 1 motif is present at residues 36–47 (FNLESKSTIGVE). The Mg(2+) site is built by T43 and D66. A Switch 2 motif is present at residues 67-86 (TAGQERYRAITSAYYRGAVG). GTP is bound by residues G69, N124, K125, D127, A155, and L156. The segment at 183-208 (DRRENDMSPSNNVVPIHVPPTTENKP) is disordered. 2 S-geranylgeranyl cysteine lipidation sites follow: C212 and C213. A Cysteine methyl ester modification is found at C213. A propeptide spans 214–216 (QNI) (removed in mature form).

The protein belongs to the small GTPase superfamily. Rab family. Requires Mg(2+) as cofactor.

Its subcellular location is the cell membrane. The protein resides in the endosome membrane. The protein localises to the recycling endosome membrane. It is found in the cleavage furrow. It localises to the cytoplasmic vesicle. Its subcellular location is the phagosome. The protein resides in the cytoplasmic vesicle membrane. The protein localises to the golgi apparatus. It is found in the trans-Golgi network. The enzyme catalyses GTP + H2O = GDP + phosphate + H(+). Regulated by guanine nucleotide exchange factors (GEFs) which promote the exchange of bound GDP for free GTP. Regulated by GTPase activating proteins (GAPs) which increase the GTP hydrolysis activity. Inhibited by GDP dissociation inhibitors (GDIs) which prevent Rab-GDP dissociation. In terms of biological role, the small GTPases Rab are key regulators of intracellular membrane trafficking, from the formation of transport vesicles to their fusion with membranes. Rabs cycle between an inactive GDP-bound form and an active GTP-bound form that is able to recruit to membranes different set of downstream effectors directly responsible for vesicle formation, movement, tethering and fusion. The small Rab GTPase RAB11A regulates endocytic recycling. May also be involved in the regulation of preciliary trafficking and neosynthesized protein export. This is Ras-related protein Rab-11A (RAB11A) from Gallus gallus (Chicken).